The primary structure comprises 158 residues: Cytochrome c-type biogenesis protein CcmE (158 aa).

The Cytoplasmic segment spans residues 1–7 (MKPRHRR). The helical; Signal-anchor for type II membrane protein transmembrane segment at 8-28 (LTLIALVLGGLGLSAGLALTA) threads the bilayer. Over 29–158 (FQDNLVFFFT…DGHPETTTAY (130 aa)) the chain is Periplasmic. The heme site is built by His123 and Tyr127. Residues 138-158 (RIGQGNGTPGPDGHPETTTAY) are disordered.

Belongs to the CcmE/CycJ family.

Its subcellular location is the cell inner membrane. Functionally, heme chaperone required for the biogenesis of c-type cytochromes. Transiently binds heme delivered by CcmC and transfers the heme to apo-cytochromes in a process facilitated by CcmF and CcmH. This Alkalilimnicola ehrlichii (strain ATCC BAA-1101 / DSM 17681 / MLHE-1) protein is Cytochrome c-type biogenesis protein CcmE.